The sequence spans 239 residues: Probable transcriptional regulatory protein Pnuc_0618 (239 aa).

The interval 1–21 is disordered; that stretch reads MAGHSKWANIQHRKGRQDEKR.

This sequence belongs to the TACO1 family.

It localises to the cytoplasm. The protein is Probable transcriptional regulatory protein Pnuc_0618 of Polynucleobacter asymbioticus (strain DSM 18221 / CIP 109841 / QLW-P1DMWA-1) (Polynucleobacter necessarius subsp. asymbioticus).